The chain runs to 204 residues: Arginine exporter protein ArgO (204 aa).

6 helical membrane-spanning segments follow: residues 1-21 (MFAV…PLGP), 37-57 (LMVA…GIFG), 67-87 (LLLG…GWGA), 111-131 (IIAT…DTFV), 147-167 (WFAL…ALLA), and 179-199 (VQRV…LQLA).

Belongs to the LysE/ArgO transporter (TC 2.A.75) family.

It localises to the cell inner membrane. It carries out the reaction L-arginine(in) = L-arginine(out). Its function is as follows. Involved in the export of arginine. Important to control the intracellular level of arginine and the correct balance between arginine and lysine. The sequence is that of Arginine exporter protein ArgO from Pectobacterium carotovorum subsp. carotovorum (strain PC1).